The following is a 409-amino-acid chain: Pentatricopeptide repeat-containing protein At1g31790 (409 aa).

PPR repeat units lie at residues 87-121 (NEDI…SIRP), 122-152 (TITF…MPHR), 153-187 (DFHS…SQKG), 192-226 (PSWI…GFID), 229-259 (DSYL…LSNA), 260-294 (NTVA…GIKK), 295-330 (NVSV…GFES), 331-361 (DCLI…SKDE), and 363-397 (SVSC…GIKA).

This sequence belongs to the PPR family. PCMP-A subfamily.

The polypeptide is Pentatricopeptide repeat-containing protein At1g31790 (PCMP-A1) (Arabidopsis thaliana (Mouse-ear cress)).